The chain runs to 175 residues: uncharacterized protein (175 aa).

Belongs to the asfivirus B175L family.

This is an uncharacterized protein from Ornithodoros (relapsing fever ticks).